The following is a 591-amino-acid chain: Nuclear receptor subfamily 4 group A member 2 (591 aa).

2 disordered regions span residues 1-22 and 110-133; these read MPCVQAQYGSSPQGASPASQSY and SEEMMSHSGSVYYKPSSPPTSSTP. Residues 8 to 22 are compositionally biased toward low complexity; that stretch reads YGSSPQGASPASQSY. The segment at residues 253-328 is a DNA-binding region (nuclear receptor); it reads EGLCAVCGDN…VGMVKEVVRT (76 aa). NR C4-type zinc fingers lie at residues 256–276 and 292–311; these read CAVCGDNAACQHYGVRTCEGC and CLANKNCPVDKRRRNRCQYC. The Bipartite nuclear localization signal (NLS1) motif lies at 280–307; it reads FKRTVQKNAKYVCLANKNCPVDKRRRNR. A disordered region spans residues 330 to 354; it reads SLKGRRGRLPSKPKSPQEPSPPSPP. Positions 331–343 match the Nuclear localization signal (NLS1) motif; it reads LKGRRGRLPSKPK. Over residues 345–354 the composition is skewed to pro residues; that stretch reads PQEPSPPSPP. Residues 353–588 enclose the NR LBD domain; sequence PPVSLISALV…AIIDKLFLDT (236 aa). Positions 436–445 match the nuclear export sequence (NES1) motif; it reads FLELFVLRLA. Residues 561-570 carry the nuclear export sequence (NES2) motif; sequence QGLQRIFYLK.

Belongs to the nuclear hormone receptor family.

The protein resides in the cytoplasm. It is found in the nucleus. Functionally, transcriptional regulator which may play a role in the differentiation and maintenance of meso-diencephalic dopaminergic (mdDA) neurons. This is Nuclear receptor subfamily 4 group A member 2 (nr4a2) from Xenopus tropicalis (Western clawed frog).